Here is a 425-residue protein sequence, read N- to C-terminus: Glutamate-1-semialdehyde 2,1-aminomutase (425 aa).

An N6-(pyridoxal phosphate)lysine modification is found at Lys-265.

The protein belongs to the class-III pyridoxal-phosphate-dependent aminotransferase family. HemL subfamily. As to quaternary structure, homodimer. Pyridoxal 5'-phosphate is required as a cofactor.

The protein localises to the cytoplasm. The enzyme catalyses (S)-4-amino-5-oxopentanoate = 5-aminolevulinate. The protein operates within porphyrin-containing compound metabolism; protoporphyrin-IX biosynthesis; 5-aminolevulinate from L-glutamyl-tRNA(Glu): step 2/2. The sequence is that of Glutamate-1-semialdehyde 2,1-aminomutase from Clostridium perfringens (strain SM101 / Type A).